The following is an 833-amino-acid chain: Leucine--tRNA ligase (833 aa).

The short motif at P41–H52 is the 'HIGH' region element. A 'KMSKS' region motif is present at residues K610–S614. Residue K613 coordinates ATP.

This sequence belongs to the class-I aminoacyl-tRNA synthetase family.

The protein localises to the cytoplasm. The enzyme catalyses tRNA(Leu) + L-leucine + ATP = L-leucyl-tRNA(Leu) + AMP + diphosphate. The sequence is that of Leucine--tRNA ligase from Streptococcus pneumoniae serotype 4 (strain ATCC BAA-334 / TIGR4).